Consider the following 581-residue polypeptide: Arginine--tRNA ligase (581 aa).

A 'HIGH' region motif is present at residues 131–141 (ANPTGPLHVGH).

It belongs to the class-I aminoacyl-tRNA synthetase family. In terms of assembly, monomer.

The protein resides in the cytoplasm. It catalyses the reaction tRNA(Arg) + L-arginine + ATP = L-arginyl-tRNA(Arg) + AMP + diphosphate. The protein is Arginine--tRNA ligase of Ruegeria pomeroyi (strain ATCC 700808 / DSM 15171 / DSS-3) (Silicibacter pomeroyi).